Here is a 395-residue protein sequence, read N- to C-terminus: Aurora kinase A (395 aa).

A disordered region spans residues 1–114; sequence MDRCKENCVS…QASLQKTEDT (114 aa). 2 stretches are compositionally biased toward polar residues: residues 29–60 and 84–99; these read QIPSQNLGSASSGQAQRVLCPSNSQRVPSQAQ and RLNNPQKNEQPAASGN. Phosphoserine is present on residues S40 and S50. Over residues 100 to 114 the composition is skewed to basic and acidic residues; sequence DSEKEQASLQKTEDT. A Protein kinase domain is found at 124-374; that stretch reads FDIGRPLGKG…LAEVLEHPWI (251 aa). Residues K134, K153, and 201-204 contribute to the ATP site; that span reads LEYA. D247 (proton acceptor) is an active-site residue. Residue K249 forms a Glycyl lysine isopeptide (Lys-Gly) (interchain with G-Cter in SUMO2) linkage. ATP contacts are provided by residues 251–252 and D265; that span reads EN. The interval 271–284 is activation segment; the sequence is HAPSSRRTTMCGTL. 2 positions are modified to phosphothreonine: T278 and T279. S333 bears the Phosphoserine; by PKA and PAK mark. Residues 376–385 are compositionally biased toward polar residues; it reads ANSSKPPTGH. The tract at residues 376–395 is disordered; that stretch reads ANSSKPPTGHTSKEPTSKSS. The segment covering 386–395 has biased composition (basic and acidic residues); sequence TSKEPTSKSS.

This sequence belongs to the protein kinase superfamily. Ser/Thr protein kinase family. Aurora subfamily. In terms of assembly, part of a complex composed of NEDD9, AURKA and CTTN; within the complex NEDD9 acts as a scaffold protein and is required for complex formation. Identified in a complex with AUNIP and NIN. Interacts with CPEB1, JTB, TACC1, TPX2, PPP2CA, as well as with the protein phosphatase type 1 (PP1) isoforms PPP1CA, PPP1CB and PPP1CC. Also interacts with its substrates ARHGEF2, BORA, KIF2A, PARD3, and p53/TP53. Interaction with BORA promotes phosphorylation of PLK1. Interacts with GADD45A, competing with its oligomerization. Interacts with FBXL7 and CIMAP3. Interacts (via C-terminus) with AUNIP (via C-terminus). Interacts with SIRT2. Interacts with FRY; this interaction facilitates AURKA-mediated PLK1 phosphorylation. Interacts with MYCN; interaction is phospho-independent and triggers AURKA activation; AURKA competes with FBXW7 for binding to unphosphorylated MYCN but not for binding to phosphorylated MYCN. Interacts with HNRNPU. Interacts with AAAS. Interacts with KLHL18 and CUL3. Interacts with FOXP1. Interacts with HDAC6; AURKA-mediated phosphorylation of HDAC6 promotes deacetylation of alpha-tubulin. Activated by phosphorylation at Thr-279; this brings about a change in the conformation of the activation segment. Phosphorylation at Thr-279 varies during the cell cycle and is highest during M phase. Autophosphorylated at Thr-279 upon TPX2 binding. Thr-279 can be phosphorylated by several kinases, including PAK and PKA. Protein phosphatase type 1 (PP1) binds AURKA and inhibits its activity by dephosphorylating Thr-279 during mitosis. Phosphorylation at Ser-333 decreases the kinase activity. PPP2CA controls degradation by dephosphorylating Ser-52 at the end of mitosis. Post-translationally, ubiquitinated by the anaphase-promoting complex (APC), leading to its degradation by the proteasome. Ubiquitinated by CHFR, leading to its degradation by the proteasome. Ubiquitinated by the E3 ubiquitin-protein ligase complex SCF(FBXL7) during mitosis, leading to its degradation by the proteasome. As to expression, detected in embryonic neurons in dorsal root ganglia and brain cortex (at protein level). Highly expressed in testis, in about one third of the seminiferous tubules. Expression is restricted to specific spermatocytes nearing completion of prophase, with levels falling off on transition to elongated spermatids. Highly expressed in the ovary, expression in the oocyte starts around the transition to large growing follicle. Abundant expression is seen in the proliferating granulosa and thecal cells of the growing follicle, and in the young corpus luteum. Very weakly expressed in spleen and intestine.

Its subcellular location is the cytoplasm. The protein resides in the cytoskeleton. It localises to the microtubule organizing center. It is found in the centrosome. The protein localises to the spindle pole. Its subcellular location is the centriole. The protein resides in the cell projection. It localises to the neuron projection. It is found in the cilium. The protein localises to the cilium basal body. Its subcellular location is the basolateral cell membrane. The catalysed reaction is L-seryl-[protein] + ATP = O-phospho-L-seryl-[protein] + ADP + H(+). It catalyses the reaction L-threonyl-[protein] + ATP = O-phospho-L-threonyl-[protein] + ADP + H(+). With respect to regulation, activation of CDK1, appears to be an upstream event of AURKA activation. Phosphatase inhibitor-2 (PPP1R2) and TPX2 act also as activators. Inactivated by the G2 checkpoint. Inhibited by GADD45A and p53/TP53, and through dephosphorylation by protein phosphatase type 1 (PP1). MLN8054 is also a potent and selective inhibitor. Activated during the early phase of cilia disassembly in the presence of CIMAP3. Inhibited by the small molecule inhibitor VX-680. Its function is as follows. Mitotic serine/threonine kinase that contributes to the regulation of cell cycle progression. Associates with the centrosome and the spindle microtubules during mitosis and plays a critical role in various mitotic events including the establishment of mitotic spindle, centrosome duplication, centrosome separation as well as maturation, chromosomal alignment, spindle assembly checkpoint, and cytokinesis. Required for normal spindle positioning during mitosis and for the localization of NUMA1 and DCTN1 to the cell cortex during metaphase. Required for initial activation of CDK1 at centrosomes. Phosphorylates numerous target proteins, including ARHGEF2, BORA, BRCA1, CDC25B, DLGP5, HDAC6, KIF2A, LATS2, NDEL1, PARD3, PPP1R2, PLK1, RASSF1, TACC3, p53/TP53 and TPX2. Phosphorylates MCRS1 which is required for MCRS1-mediated kinetochore fiber assembly and mitotic progression. Regulates KIF2A tubulin depolymerase activity. Required for normal axon formation. Plays a role in microtubule remodeling during neurite extension. Important for microtubule formation and/or stabilization. Also acts as a key regulatory component of the p53/TP53 pathway, and particularly the checkpoint-response pathways critical for oncogenic transformation of cells, by phosphorylating and destabilizing p53/TP53. Phosphorylates its own inhibitors, the protein phosphatase type 1 (PP1) isoforms, to inhibit their activity. Inhibits cilia outgrowth. Required for cilia disassembly via phosphorylation of HDAC6 and subsequent deacetylation of alpha-tubulin. Regulates protein levels of the anti-apoptosis protein BIRC5 by suppressing the expression of the SCF(FBXL7) E3 ubiquitin-protein ligase substrate adapter FBXL7 through the phosphorylation of the transcription factor FOXP1. In Mus musculus (Mouse), this protein is Aurora kinase A (Aurka).